A 176-amino-acid polypeptide reads, in one-letter code: ATP-dependent protease subunit HslV (176 aa).

T2 is an active-site residue. Residues G157, C160, and T163 each coordinate Na(+).

This sequence belongs to the peptidase T1B family. HslV subfamily. In terms of assembly, a double ring-shaped homohexamer of HslV is capped on each side by a ring-shaped HslU homohexamer. The assembly of the HslU/HslV complex is dependent on binding of ATP.

Its subcellular location is the cytoplasm. It catalyses the reaction ATP-dependent cleavage of peptide bonds with broad specificity.. Its activity is regulated as follows. Allosterically activated by HslU binding. Protease subunit of a proteasome-like degradation complex believed to be a general protein degrading machinery. The sequence is that of ATP-dependent protease subunit HslV from Marinobacter nauticus (strain ATCC 700491 / DSM 11845 / VT8) (Marinobacter aquaeolei).